The chain runs to 335 residues: Glyceraldehyde-3-phosphate dehydrogenase (335 aa).

NAD(+) contacts are provided by residues arginine 10–isoleucine 11, aspartate 33, lysine 77, and threonine 119. D-glyceraldehyde 3-phosphate is bound by residues serine 150–threonine 152, threonine 181, threonine 210–glycine 211, and arginine 233. Cysteine 151 (nucleophile) is an active-site residue. An NAD(+)-binding site is contributed by asparagine 315.

It belongs to the glyceraldehyde-3-phosphate dehydrogenase family. As to quaternary structure, homotetramer.

The protein resides in the cytoplasm. It carries out the reaction D-glyceraldehyde 3-phosphate + phosphate + NAD(+) = (2R)-3-phospho-glyceroyl phosphate + NADH + H(+). It functions in the pathway carbohydrate degradation; glycolysis; pyruvate from D-glyceraldehyde 3-phosphate: step 1/5. Functionally, catalyzes the oxidative phosphorylation of glyceraldehyde 3-phosphate (G3P) to 1,3-bisphosphoglycerate (BPG) using the cofactor NAD. The first reaction step involves the formation of a hemiacetal intermediate between G3P and a cysteine residue, and this hemiacetal intermediate is then oxidized to a thioester, with concomitant reduction of NAD to NADH. The reduced NADH is then exchanged with the second NAD, and the thioester is attacked by a nucleophilic inorganic phosphate to produce BPG. This Chlamydia muridarum (strain MoPn / Nigg) protein is Glyceraldehyde-3-phosphate dehydrogenase (gap).